The following is a 323-amino-acid chain: HPr kinase/phosphorylase (323 aa).

Catalysis depends on residues His146 and Lys167. Residue Gly161–Ser168 coordinates ATP. Mg(2+) is bound at residue Ser168. Catalysis depends on Asp185, which acts as the Proton acceptor; for phosphorylation activity. Proton donor; for dephosphorylation activity. An important for the catalytic mechanism of both phosphorylation and dephosphorylation region spans residues Leu209 to Asp218. Position 210 (Glu210) interacts with Mg(2+). Arg250 is a catalytic residue. The interval Gln271 to Arg276 is important for the catalytic mechanism of dephosphorylation.

This sequence belongs to the HPrK/P family. As to quaternary structure, homohexamer. Mg(2+) serves as cofactor.

It carries out the reaction [HPr protein]-L-serine + ATP = [HPr protein]-O-phospho-L-serine + ADP + H(+). The catalysed reaction is [HPr protein]-O-phospho-L-serine + phosphate + H(+) = [HPr protein]-L-serine + diphosphate. Its function is as follows. Catalyzes the ATP- as well as the pyrophosphate-dependent phosphorylation of a specific serine residue in HPr, a phosphocarrier protein of the phosphoenolpyruvate-dependent sugar phosphotransferase system (PTS). HprK/P also catalyzes the pyrophosphate-producing, inorganic phosphate-dependent dephosphorylation (phosphorolysis) of seryl-phosphorylated HPr (P-Ser-HPr). In Cupriavidus pinatubonensis (strain JMP 134 / LMG 1197) (Cupriavidus necator (strain JMP 134)), this protein is HPr kinase/phosphorylase.